A 348-amino-acid polypeptide reads, in one-letter code: Dihydroorotase (348 aa).

The Zn(2+) site is built by histidine 17 and histidine 19. Substrate contacts are provided by residues 19–21 and asparagine 45; that span reads HLR. Zn(2+) is bound by residues lysine 103, histidine 140, and histidine 178. An N6-carboxylysine modification is found at lysine 103. Histidine 140 serves as a coordination point for substrate. Leucine 223 provides a ligand contact to substrate. Aspartate 251 contributes to the Zn(2+) binding site. Aspartate 251 is an active-site residue. Histidine 255 and alanine 267 together coordinate substrate.

It belongs to the metallo-dependent hydrolases superfamily. DHOase family. Class II DHOase subfamily. In terms of assembly, homodimer. The cofactor is Zn(2+).

The catalysed reaction is (S)-dihydroorotate + H2O = N-carbamoyl-L-aspartate + H(+). Its pathway is pyrimidine metabolism; UMP biosynthesis via de novo pathway; (S)-dihydroorotate from bicarbonate: step 3/3. In terms of biological role, catalyzes the reversible cyclization of carbamoyl aspartate to dihydroorotate. In Escherichia fergusonii (strain ATCC 35469 / DSM 13698 / CCUG 18766 / IAM 14443 / JCM 21226 / LMG 7866 / NBRC 102419 / NCTC 12128 / CDC 0568-73), this protein is Dihydroorotase.